The following is a 145-amino-acid chain: Small ribosomal subunit protein uS19 (145 aa).

Belongs to the universal ribosomal protein uS19 family. In terms of assembly, component of the small ribosomal subunit.

The protein resides in the cytoplasm. Functionally, component of the small ribosomal subunit. The ribosome is a large ribonucleoprotein complex responsible for the synthesis of proteins in the cell. The polypeptide is Small ribosomal subunit protein uS19 (rps15) (Xenopus laevis (African clawed frog)).